Reading from the N-terminus, the 559-residue chain is Nucleoprotein (559 aa).

Positions M53–I235 are binding site for the cap structure m7GTP. Residues D378 and E380 each contribute to the Mn(2+) site. Positions 388, 495, 498, and 519 each coordinate Zn(2+). D523 contributes to the Mn(2+) binding site.

This sequence belongs to the arenaviridae nucleocapsid protein family. Homomultimerizes to form the nucleocapsid. Binds to viral genomic RNA. Interacts with glycoprotein G2. Interacts with protein Z; this interaction probably directs the encapsidated genome to budding sites. Interacts with protein L; this interaction does not interfere with Z-L interaction. Interacts with host IKBKE (via Protein kinase domain); the interaction inhibits IKBKE kinase activity.

It localises to the virion. The protein localises to the host cytoplasm. Encapsidates the genome, protecting it from nucleases. The encapsidated genomic RNA is termed the nucleocapsid (NC). Serves as template for viral transcription and replication. The increased presence of protein N in host cell does not seem to trigger the switch from transcription to replication as observed in other negative strain RNA viruses. Through the interaction with host IKBKE, strongly inhibits the phosphorylation and nuclear translocation of host IRF3, a protein involved in interferon activation pathway, leading to the inhibition of interferon-beta and IRF3-dependent promoters activation. Also encodes a functional 3'-5' exoribonuclease that degrades preferentially dsRNA substrates and thereby participates in the suppression of interferon induction. The sequence is that of Nucleoprotein from Sooretamys angouya (Paraguayan rice rat).